Consider the following 284-residue polypeptide: Formamidopyrimidine-DNA glycosylase (284 aa).

P2 serves as the catalytic Schiff-base intermediate with DNA. The active-site Proton donor is E3. The active-site Proton donor; for beta-elimination activity is the K60. DNA contacts are provided by H99, R118, and R163. Residues 248-282 (WVYGRQGQPCRTCGQTIERIKLVGRSTHFCPQCQP) form an FPG-type zinc finger. The Proton donor; for delta-elimination activity role is filled by R272.

It belongs to the FPG family. In terms of assembly, monomer. It depends on Zn(2+) as a cofactor.

It catalyses the reaction Hydrolysis of DNA containing ring-opened 7-methylguanine residues, releasing 2,6-diamino-4-hydroxy-5-(N-methyl)formamidopyrimidine.. It carries out the reaction 2'-deoxyribonucleotide-(2'-deoxyribose 5'-phosphate)-2'-deoxyribonucleotide-DNA = a 3'-end 2'-deoxyribonucleotide-(2,3-dehydro-2,3-deoxyribose 5'-phosphate)-DNA + a 5'-end 5'-phospho-2'-deoxyribonucleoside-DNA + H(+). Its function is as follows. Involved in base excision repair of DNA damaged by oxidation or by mutagenic agents. Acts as a DNA glycosylase that recognizes and removes damaged bases. Has a preference for oxidized purines, such as 7,8-dihydro-8-oxoguanine (8-oxoG). Has AP (apurinic/apyrimidinic) lyase activity and introduces nicks in the DNA strand. Cleaves the DNA backbone by beta-delta elimination to generate a single-strand break at the site of the removed base with both 3'- and 5'-phosphates. The sequence is that of Formamidopyrimidine-DNA glycosylase from Acaryochloris marina (strain MBIC 11017).